The primary structure comprises 350 residues: UDP-N-acetylglucosamine--N-acetylmuramyl-(pentapeptide) pyrophosphoryl-undecaprenol N-acetylglucosamine transferase (350 aa).

UDP-N-acetyl-alpha-D-glucosamine contacts are provided by residues 9–11 (TGG), Asn-123, Arg-159, Ser-181, and Gln-281.

This sequence belongs to the glycosyltransferase 28 family. MurG subfamily.

The protein resides in the cell inner membrane. The enzyme catalyses di-trans,octa-cis-undecaprenyl diphospho-N-acetyl-alpha-D-muramoyl-L-alanyl-D-glutamyl-meso-2,6-diaminopimeloyl-D-alanyl-D-alanine + UDP-N-acetyl-alpha-D-glucosamine = di-trans,octa-cis-undecaprenyl diphospho-[N-acetyl-alpha-D-glucosaminyl-(1-&gt;4)]-N-acetyl-alpha-D-muramoyl-L-alanyl-D-glutamyl-meso-2,6-diaminopimeloyl-D-alanyl-D-alanine + UDP + H(+). It participates in cell wall biogenesis; peptidoglycan biosynthesis. Its function is as follows. Cell wall formation. Catalyzes the transfer of a GlcNAc subunit on undecaprenyl-pyrophosphoryl-MurNAc-pentapeptide (lipid intermediate I) to form undecaprenyl-pyrophosphoryl-MurNAc-(pentapeptide)GlcNAc (lipid intermediate II). The sequence is that of UDP-N-acetylglucosamine--N-acetylmuramyl-(pentapeptide) pyrophosphoryl-undecaprenol N-acetylglucosamine transferase from Helicobacter hepaticus (strain ATCC 51449 / 3B1).